The chain runs to 282 residues: Bis(5'-nucleosyl)-tetraphosphatase, symmetrical (282 aa).

This sequence belongs to the Ap4A hydrolase family.

The catalysed reaction is P(1),P(4)-bis(5'-adenosyl) tetraphosphate + H2O = 2 ADP + 2 H(+). In terms of biological role, hydrolyzes diadenosine 5',5'''-P1,P4-tetraphosphate to yield ADP. The sequence is that of Bis(5'-nucleosyl)-tetraphosphatase, symmetrical from Burkholderia mallei (strain NCTC 10247).